The following is a 721-amino-acid chain: Polyribonucleotide nucleotidyltransferase (721 aa).

2 residues coordinate Mg(2+): aspartate 487 and aspartate 493. Residues 554-613 (PRIETFKIPTDKIREVIGTGGKVIREIVEKTGAKVNIDDDGTVKVASSDGESIKAAIKWI) enclose the KH domain. The S1 motif domain occupies 623 to 691 (NAIYDGTVVK…DRGKTRLSMK (69 aa)). The segment at 697–721 (TGEDLEAKQKAEAEKAKAEGAPAAE) is disordered. Residues 701–714 (LEAKQKAEAEKAKA) show a composition bias toward basic and acidic residues.

It belongs to the polyribonucleotide nucleotidyltransferase family. Requires Mg(2+) as cofactor.

It is found in the cytoplasm. It catalyses the reaction RNA(n+1) + phosphate = RNA(n) + a ribonucleoside 5'-diphosphate. Involved in mRNA degradation. Catalyzes the phosphorolysis of single-stranded polyribonucleotides processively in the 3'- to 5'-direction. This is Polyribonucleotide nucleotidyltransferase from Rhodopseudomonas palustris (strain BisA53).